The sequence spans 533 residues: D-3-phosphoglycerate dehydrogenase (533 aa).

A2 bears the N-acetylalanine mark. S14 carries the post-translational modification Phosphoserine. The residue at position 21 (K21) is an N6-acetyllysine; alternate. K21 participates in a covalent cross-link: Glycyl lysine isopeptide (Lys-Gly) (interchain with G-Cter in SUMO1); alternate. A Glycyl lysine isopeptide (Lys-Gly) (interchain with G-Cter in SUMO2); alternate cross-link involves residue K21. An N6-acetyllysine modification is found at K58. NAD(+) is bound by residues T78, R155–I156, D175, T207, C234–R236, and D260. The residue at position 78 (T78) is a Phosphothreonine. R236 is a catalytic residue. Residue E265 is part of the active site. H283 serves as the catalytic Proton donor. Position 283–286 (H283–A286) interacts with NAD(+).

Belongs to the D-isomer specific 2-hydroxyacid dehydrogenase family. As to quaternary structure, homotetramer.

It carries out the reaction (2R)-3-phosphoglycerate + NAD(+) = 3-phosphooxypyruvate + NADH + H(+). The catalysed reaction is (R)-2-hydroxyglutarate + NAD(+) = 2-oxoglutarate + NADH + H(+). The enzyme catalyses (S)-malate + NAD(+) = oxaloacetate + NADH + H(+). The protein operates within amino-acid biosynthesis; L-serine biosynthesis; L-serine from 3-phospho-D-glycerate: step 1/3. In terms of biological role, catalyzes the reversible oxidation of 3-phospho-D-glycerate to 3-phosphonooxypyruvate, the first step of the phosphorylated L-serine biosynthesis pathway. Also catalyzes the reversible oxidation of 2-hydroxyglutarate to 2-oxoglutarate and the reversible oxidation of (S)-malate to oxaloacetate. This is D-3-phosphoglycerate dehydrogenase (PHGDH) from Pan troglodytes (Chimpanzee).